Here is a 221-residue protein sequence, read N- to C-terminus: tRNA (guanine-N(7)-)-methyltransferase (221 aa).

3 residues coordinate S-adenosyl-L-methionine: glutamate 43, glutamate 68, and aspartate 123. The active site involves aspartate 123. Substrate is bound by residues lysine 127, aspartate 159, and 199–202 (TEYE).

It belongs to the class I-like SAM-binding methyltransferase superfamily. TrmB family.

The enzyme catalyses guanosine(46) in tRNA + S-adenosyl-L-methionine = N(7)-methylguanosine(46) in tRNA + S-adenosyl-L-homocysteine. It participates in tRNA modification; N(7)-methylguanine-tRNA biosynthesis. Functionally, catalyzes the formation of N(7)-methylguanine at position 46 (m7G46) in tRNA. This is tRNA (guanine-N(7)-)-methyltransferase from Mycoplasma mycoides subsp. mycoides SC (strain CCUG 32753 / NCTC 10114 / PG1).